Reading from the N-terminus, the 475-residue chain is Ribulose bisphosphate carboxylase large chain (475 aa).

The propeptide occupies methionine 1–serine 2. N-acetylproline is present on proline 3. An N6,N6,N6-trimethyllysine modification is found at lysine 14. The substrate site is built by asparagine 123 and threonine 173. Residue lysine 175 is the Proton acceptor of the active site. Lysine 177 is a substrate binding site. Mg(2+) is bound by residues lysine 201, aspartate 203, and glutamate 204. Lysine 201 bears the N6-carboxylysine mark. The active-site Proton acceptor is histidine 294. Substrate-binding residues include arginine 295, histidine 327, and serine 379.

Belongs to the RuBisCO large chain family. Type I subfamily. In terms of assembly, heterohexadecamer of 8 large chains and 8 small chains; disulfide-linked. The disulfide link is formed within the large subunit homodimers. It depends on Mg(2+) as a cofactor. Post-translationally, the disulfide bond which can form in the large chain dimeric partners within the hexadecamer appears to be associated with oxidative stress and protein turnover.

The protein resides in the plastid. It is found in the chloroplast. The catalysed reaction is 2 (2R)-3-phosphoglycerate + 2 H(+) = D-ribulose 1,5-bisphosphate + CO2 + H2O. It carries out the reaction D-ribulose 1,5-bisphosphate + O2 = 2-phosphoglycolate + (2R)-3-phosphoglycerate + 2 H(+). Its function is as follows. RuBisCO catalyzes two reactions: the carboxylation of D-ribulose 1,5-bisphosphate, the primary event in carbon dioxide fixation, as well as the oxidative fragmentation of the pentose substrate in the photorespiration process. Both reactions occur simultaneously and in competition at the same active site. The protein is Ribulose bisphosphate carboxylase large chain of Magnolia acuminata (Cucumber tree).